A 150-amino-acid polypeptide reads, in one-letter code: Large ribosomal subunit protein uL13 (150 aa).

The protein belongs to the universal ribosomal protein uL13 family. In terms of assembly, part of the 50S ribosomal subunit.

This protein is one of the early assembly proteins of the 50S ribosomal subunit, although it is not seen to bind rRNA by itself. It is important during the early stages of 50S assembly. The chain is Large ribosomal subunit protein uL13 from Sulfurihydrogenibium sp. (strain YO3AOP1).